Reading from the N-terminus, the 164-residue chain is Phosphopantetheine adenylyltransferase (164 aa).

Substrate is bound at residue Ser-9. ATP is bound by residues 9–10 and His-17; that span reads SF. Residues Lys-41, Leu-73, and Lys-87 each contribute to the substrate site. ATP contacts are provided by residues 88–90, Glu-98, and 122–128; these read GLR and YSYLSSS.

It belongs to the bacterial CoaD family. As to quaternary structure, homohexamer. Mg(2+) serves as cofactor.

Its subcellular location is the cytoplasm. It catalyses the reaction (R)-4'-phosphopantetheine + ATP + H(+) = 3'-dephospho-CoA + diphosphate. It participates in cofactor biosynthesis; coenzyme A biosynthesis; CoA from (R)-pantothenate: step 4/5. Functionally, reversibly transfers an adenylyl group from ATP to 4'-phosphopantetheine, yielding dephospho-CoA (dPCoA) and pyrophosphate. The protein is Phosphopantetheine adenylyltransferase of Rhodococcus erythropolis (strain PR4 / NBRC 100887).